Reading from the N-terminus, the 1424-residue chain is Putative disease resistance protein At3g14460 (1424 aa).

In terms of domain architecture, NB-ARC spans 152-454; sequence WRQASRSRPD…AIDLLYQPRS (303 aa). An ATP-binding site is contributed by 200 to 207; that stretch reads GMPGVGKT. LRR repeat units lie at residues 498 to 523, 552 to 571, 572 to 595, 597 to 618, 620 to 641, 642 to 665, and 806 to 830; these read VSGD…HFSF, PTSL…LLNA, LSGL…LKGL, LLRY…VCTL, NLQT…SIAE, LINL…IKKL, and LPSL…FFFG. Disordered regions lie at residues 911-977 and 1050-1070; these read FRRS…PKDR and IKSS…QYDD. Composition is skewed to polar residues over residues 912 to 927 and 934 to 972; these read RRSL…SIPS and SSPT…SLSS. LRR repeat units lie at residues 1090-1114, 1118-1139, 1238-1262, 1264-1286, and 1310-1336; these read PQNL…LTES, LHEL…HPPT, TPKL…LFGL, SLLS…GFPS, and LENL…LLPK.

It belongs to the disease resistance NB-LRR family.

Its function is as follows. Potential disease resistance protein. This Arabidopsis thaliana (Mouse-ear cress) protein is Putative disease resistance protein At3g14460.